The sequence spans 585 residues: Pentatricopeptide repeat-containing protein At4g21170 (585 aa).

PPR repeat units lie at residues 152–186, 187–221, 222–247, 252–286, 287–321, 324–358, 360–394, 396–431, 432–466, 467–501, 502–534, and 538–572; these read LSVS…RLSP, SQSA…GIVS, DELT…KLME, SCKI…KLEL, SFCS…KFVT, DSAV…ETVR, WDST…GITV, DESC…GFVP, CTHK…EVYF, DSFA…KGSL, DVNA…MKEI, and NSKS…GLKP.

This sequence belongs to the PPR family. P subfamily.

The polypeptide is Pentatricopeptide repeat-containing protein At4g21170 (Arabidopsis thaliana (Mouse-ear cress)).